The following is a 342-amino-acid chain: Antihemorrhagic factor cHLP-B (342 aa).

Residues 1-19 form the signal peptide; it reads MNSLVALVLLGQMIGSTLS. Cystatin fetuin-A-type domains lie at 20–129 and 140–253; these read HHLQ…AKCH and RNCP…SDCV. 6 cysteine pairs are disulfide-bonded: Cys-28-Cys-333, Cys-85-Cys-96, Cys-110-Cys-128, Cys-142-Cys-145, Cys-204-Cys-216, and Cys-229-Cys-252. N-linked (GlcNAc...) asparagine glycosylation is present at Asn-95. N-linked (GlcNAc...) asparagine glycosylation is present at Asn-203. 2 N-linked (GlcNAc...) asparagine glycosylation sites follow: Asn-281 and Asn-292.

It belongs to the fetuin family. Homodimer. As to expression, expressed by the liver.

It localises to the secreted. Functionally, potent inhibitor of hemorrhagic activity but also proteolytic activities. Inhibition occurs by formation of a non-covalent complex between this protein and the proteinases at their metalloproteinase domains. This is Antihemorrhagic factor cHLP-B from Gloydius brevicauda (Korean slamosa snake).